Consider the following 471-residue polypeptide: MSKKYDAGVKEYRDTYWTPDYVPLDTDLLACFKCTGQEGVPKEEVAAAVAAESSTGTWSTVWSELLTDLDFYKGRCYRIEDVPGDKESFYAFIAYPLDLFEEGSITNVLTSLVGNVFGFKALRHLRLEDIRFPLAFIKTCYGPPNGIVVERDRMNKYGRPLLGCTIKPKLGLSGKNYGRVVYECLRGGLDFTKDDENINSQPFQRWQNRFEFVAEAIRLAEQETGEKKGHYLNVTANTPEEMYERAEFAKELGMPIVMHDFITGGFTANTGLSKWCRKNGMLLHIHRAMHAVIDRHPKHGIHFRVLAKCLRLSGGDQLHTGTVVGKLEGDRQTTLGYIDQLRESFVPEDRSRGNFFDQDWGSMPGVFAVASGGIHVWHMPALVTIFGDDSVLQFGGGTHGHPWGSAAGAAANRVALEACVKARNAGRHLEKESRDILMEAAKHSPELAIALETWKEIKFEFDTVDKLDVQS.

Residues N115 and T165 each coordinate substrate. K167 (proton acceptor) is an active-site residue. Substrate is bound at residue K169. K193, D195, and E196 together coordinate Mg(2+). An N6-carboxylysine modification is found at K193. The active-site Proton acceptor is the H286. The substrate site is built by R287, H319, and S371.

Belongs to the RuBisCO large chain family. Type I subfamily. In terms of assembly, heterohexadecamer of 8 large chains and 8 small chains. Mg(2+) serves as cofactor.

The protein localises to the carboxysome. The catalysed reaction is 2 (2R)-3-phosphoglycerate + 2 H(+) = D-ribulose 1,5-bisphosphate + CO2 + H2O. It catalyses the reaction D-ribulose 1,5-bisphosphate + O2 = 2-phosphoglycolate + (2R)-3-phosphoglycerate + 2 H(+). RuBisCO catalyzes two reactions: the carboxylation of D-ribulose 1,5-bisphosphate, the primary event in carbon dioxide fixation, as well as the oxidative fragmentation of the pentose substrate in the photorespiration process. Both reactions occur simultaneously and in competition at the same active site. The sequence is that of Ribulose bisphosphate carboxylase large chain from Synechococcus sp. (strain RCC307).